We begin with the raw amino-acid sequence, 688 residues long: Lipase (688 aa).

Residues 1–35 (MKTRQNKYSIRKFSVGASSILIAALLFMGGGSAQA) form the signal peptide. The interval 31 to 309 (GSAQAAEQQQ…KSAKQKQYKN (279 aa)) is disordered. Positions 36–302 (AEQQQDKGTV…KNEDQTNKSA (267 aa)) are cleaved as a propeptide — removed in mature form. The segment covering 45 to 54 (VENSTTQSIG) has biased composition (polar residues). The segment covering 68-79 (NKNVNEKSNVNS) has biased composition (low complexity). 2 stretches are compositionally biased toward basic and acidic residues: residues 84–95 (ESLHNETPKNED) and 103–143 (SQND…KHAS). Positions 144-172 (ENNQTLHSKAAQSNEDVKTKPSQLDNTAA) are enriched in polar residues. The segment covering 173 to 183 (KQEDSQKENLS) has biased composition (basic and acidic residues). Residues 184–211 (KQDTQSSKTTDLLRATAQNQSKDSQSTE) are compositionally biased toward polar residues. Positions 240–267 (SKEEPLKVDKQANPTTDKDKSSKNDKGS) are enriched in basic and acidic residues. Polar residues predominate over residues 274–289 (LESNAVATTNKQSKQQ). S418 acts as the Nucleophile in catalysis. D609 (charge relay system) is an active-site residue. D647 provides a ligand contact to Ca(2+). H648 functions as the Charge relay system in the catalytic mechanism. Residues D650, D655, and D658 each contribute to the Ca(2+) site.

Belongs to the AB hydrolase superfamily. Lipase family.

The protein localises to the secreted. It catalyses the reaction a triacylglycerol + H2O = a diacylglycerol + a fatty acid + H(+). This is Lipase (lip) from Staphylococcus epidermidis (strain ATCC 12228 / FDA PCI 1200).